Reading from the N-terminus, the 466-residue chain is Serine/threonine-protein kinase SSN3 (466 aa).

The 365-residue stretch at 32–396 (YKILGFISSG…ARDALRHPWF (365 aa)) folds into the Protein kinase domain. Residue 38–46 (ISSGTYGRV) participates in ATP binding. Residues 58–105 (ASAKSALPSSTRAALSLPKDKLPSPSFTEDSDPLNNPEMCMRPGDRPA) form a disordered region. Residue K114 coordinates ATP. The active-site Proton acceptor is D216. Residues 421–466 (THEDNGDAKMGSLPQSMAGGRLPSSSNFRPASGNIVQPAARKKARI) form a disordered region.

Belongs to the protein kinase superfamily. CMGC Ser/Thr protein kinase family. CDC2/CDKX subfamily. Component of the SRB8-11 complex, a regulatory module of the Mediator complex. It depends on Mg(2+) as a cofactor.

It is found in the nucleus. It carries out the reaction L-seryl-[protein] + ATP = O-phospho-L-seryl-[protein] + ADP + H(+). It catalyses the reaction L-threonyl-[protein] + ATP = O-phospho-L-threonyl-[protein] + ADP + H(+). The enzyme catalyses [DNA-directed RNA polymerase] + ATP = phospho-[DNA-directed RNA polymerase] + ADP + H(+). Component of the SRB8-11 complex. The SRB8-11 complex is a regulatory module of the Mediator complex which is itself involved in regulation of basal and activated RNA polymerase II-dependent transcription. The SRB8-11 complex may be involved in the transcriptional repression of a subset of genes regulated by Mediator. It may inhibit the association of the Mediator complex with RNA polymerase II to form the holoenzyme complex. The SRB8-11 complex phosphorylates the C-terminal domain (CTD) of the largest subunit of RNA polymerase II. The protein is Serine/threonine-protein kinase SSN3 (SSN3) of Cryptococcus neoformans var. neoformans serotype D (strain B-3501A) (Filobasidiella neoformans).